Consider the following 412-residue polypeptide: DnaJ homolog subfamily A member 2 (412 aa).

The 63-residue stretch at 8-70 (KLYDILGVPP…EKRELYDRYG (63 aa)) folds into the J domain. Lysine 39 is subject to N6-acetyllysine. A phosphoserine mark is found at serine 78 and serine 123. A CR-type zinc finger spans residues 130–214 (GKTTKLQLSK…CEGKKVIKEV (85 aa)). Residue lysine 134 forms a Glycyl lysine isopeptide (Lys-Gly) (interchain with G-Cter in SUMO2) linkage. Zn(2+)-binding residues include cysteine 143 and cysteine 146. The CXXCXGXG motif repeat unit spans residues 143–150 (CSACSGQG). An N6-acetyllysine modification is found at lysine 152. Cysteine 159, cysteine 162, cysteine 186, cysteine 189, cysteine 202, and cysteine 205 together coordinate Zn(2+). CXXCXGXG motif repeat units follow at residues 159–166 (CSACRGRG), 186–193 (CSDCNGEG), and 202–209 (CKKCEGKK). Residues 365–412 (IGETEEVELQEFDSTRGSGGGQRREAYNDSSDEESSSHHGPGVQCAHQ) form a disordered region. Tyrosine 391 bears the Phosphotyrosine mark. Phosphoserine is present on residues serine 394 and serine 395. Position 409 is a cysteine methyl ester (cysteine 409). Cysteine 409 carries S-farnesyl cysteine lipidation. Residues 410-412 (AHQ) constitute a propeptide, removed in mature form.

It is found in the membrane. Co-chaperone of Hsc70. Stimulates ATP hydrolysis and the folding of unfolded proteins mediated by HSPA1A/B (in vitro). The chain is DnaJ homolog subfamily A member 2 (Dnaja2) from Mus musculus (Mouse).